A 259-amino-acid chain; its full sequence is uncharacterized protein (259 aa).

Positions 1–19 form a signal peptide, or 26; it reads MKLSVKIAGVLTVAAAAMT. ATP is bound at residue 214–221; it reads GPYELGKT.

This is an uncharacterized protein from Bacillus subtilis (strain 168).